A 31-amino-acid chain; its full sequence is uncharacterized protein (31 aa).

A helical transmembrane segment spans residues 7 to 29; that stretch reads TVVLINFFAAVGLFTLISMRFGW.

It is found in the cell inner membrane. This is an uncharacterized protein from Escherichia coli (strain K12).